A 399-amino-acid chain; its full sequence is MNIHEYQAKQVLAKYGVPVLKGGVAYTAEEAEKVALDLAGPVYVVKSQIHAGGRGKGHFKEPSAGDKGGVRVVKSTDEVFSNAKQMLGATLVTHQSGAEGKEVKRVYIEDGCDIKRELYLSLLVDRATSAVTVMASTEGGMDIEEVANHSPEKIFFQAIDQATGISGFHCRNVAFSLGLEGKQVGAFTKLLSALYKCFTETDCSMLEINPLVVTGDGQVIPLDCKMNFDSNALYRHPDIVEYRDEDEEDPMELEASKHDLNYIKLDGSIGCMVNGAGLAMATMDIIKLKGGAPANFLDVGGGATRERVTAAFKIILSDPNVDGILVNIFGGIMRCDVIAEGVIAAAREVSLNVPLVVRLEGTNVELGKKIMVESGLPIISADNLADAAEKVVKAVKEAS.

Residues 9–254 (KQVLAKYGVP…EDEEDPMELE (246 aa)) enclose the ATP-grasp domain. ATP-binding positions include lysine 46, 53–55 (GRG), glutamate 109, cysteine 112, and glutamate 117. Mg(2+)-binding residues include asparagine 209 and aspartate 223. Residues asparagine 274 and 331–333 (GIM) contribute to the substrate site.

Belongs to the succinate/malate CoA ligase beta subunit family. In terms of assembly, heterotetramer of two alpha and two beta subunits. Mg(2+) is required as a cofactor.

The enzyme catalyses succinate + ATP + CoA = succinyl-CoA + ADP + phosphate. It carries out the reaction GTP + succinate + CoA = succinyl-CoA + GDP + phosphate. It functions in the pathway carbohydrate metabolism; tricarboxylic acid cycle; succinate from succinyl-CoA (ligase route): step 1/1. In terms of biological role, succinyl-CoA synthetase functions in the citric acid cycle (TCA), coupling the hydrolysis of succinyl-CoA to the synthesis of either ATP or GTP and thus represents the only step of substrate-level phosphorylation in the TCA. The beta subunit provides nucleotide specificity of the enzyme and binds the substrate succinate, while the binding sites for coenzyme A and phosphate are found in the alpha subunit. This Rhodospirillum rubrum (strain ATCC 11170 / ATH 1.1.1 / DSM 467 / LMG 4362 / NCIMB 8255 / S1) protein is Succinate--CoA ligase [ADP-forming] subunit beta.